Here is a 202-residue protein sequence, read N- to C-terminus: Na(+)-translocating NADH-quinone reductase subunit E (202 aa).

Transmembrane regions (helical) follow at residues 4–24, 35–55, 81–101, 114–134, 144–164, and 180–200; these read LAGL…FFLG, IEVA…TVPI, FLGL…LEMF, GIYL…LFMV, LVYG…LAGV, and LGIT…FSGI.

The protein belongs to the NqrDE/RnfAE family. Composed of six subunits; NqrA, NqrB, NqrC, NqrD, NqrE and NqrF.

Its subcellular location is the cell inner membrane. It catalyses the reaction a ubiquinone + n Na(+)(in) + NADH + H(+) = a ubiquinol + n Na(+)(out) + NAD(+). NQR complex catalyzes the reduction of ubiquinone-1 to ubiquinol by two successive reactions, coupled with the transport of Na(+) ions from the cytoplasm to the periplasm. NqrA to NqrE are probably involved in the second step, the conversion of ubisemiquinone to ubiquinol. This chain is Na(+)-translocating NADH-quinone reductase subunit E, found in Nitrosomonas europaea (strain ATCC 19718 / CIP 103999 / KCTC 2705 / NBRC 14298).